The primary structure comprises 199 residues: COMM domain-containing protein 2 (199 aa).

In terms of domain architecture, COMM spans 123–190 (SYHNLEWRLD…QALEEMKTNH (68 aa)).

Belongs to the COMM domain-containing protein 2 family. In terms of assembly, component of the commander complex consisting of the CCC subcomplex and the retriever subcomplex. Component of the CCC (COMMD/CCDC22/CCDC93) subcomplex consisting of COMMD1, COMMD2, COMMD3, COMMD4, COMMD5, COMMD6, COMMD7, COMMD8, COMMD9, COMMD10, CCDC22 and CCDC93; within the complex forms a heterodimer with COMMD3. Interacts with RELA, RELB, NFKB1/p105, NFKB2/p100. Interacts with CCDC22, CCDC93, SCNN1B, CUL3, CUL4B, CUL5, CUL7.

It is found in the cytoplasm. Scaffold protein in the commander complex that is essential for endosomal recycling of transmembrane cargos; the commander complex is composed of the CCC subcomplex and the retriever subcomplex. May modulate activity of cullin-RING E3 ubiquitin ligase (CRL) complexes. May down-regulate activation of NF-kappa-B. The chain is COMM domain-containing protein 2 (COMMD2) from Pongo abelii (Sumatran orangutan).